The chain runs to 444 residues: Acetyl-CoA--deacetylcephalosporin C acetyltransferase (444 aa).

Positions 1 to 71 (MLPSAQVARL…PQIANRFEAS (71 aa)) are excised as a propeptide. The AB hydrolase-1 domain maps to 112 to 425 (VIVCHTLTSS…DTNEGHDFFV (314 aa)). Catalysis depends on residues serine 208 and histidine 421.

It belongs to the AB hydrolase superfamily. MetX family. In terms of assembly, heterodimer of chain I and chain II.

The catalysed reaction is deacetylcephalosporin C + acetyl-CoA = cephalosporin C + CoA. It participates in antibiotic biosynthesis; cephalosporin C biosynthesis. Functionally, catalyzes the conversion of deacetylcephalosporin C to cephalosporin C. The protein is Acetyl-CoA--deacetylcephalosporin C acetyltransferase (CEFG) of Hapsidospora chrysogena (Acremonium chrysogenum).